Reading from the N-terminus, the 1726-residue chain is Transcription elongation factor SPT6 (1726 aa).

Acidic residues-rich tracts occupy residues 1 to 14, 32 to 49, and 59 to 80; these read MSDF…ESEE, EEED…DDQD, and NDDD…DSED. Residues 1-197 form a disordered region; that stretch reads MSDFVESEAE…DDGQPLKKPK (197 aa). Ser2 is subject to N-acetylserine. Residues 2 to 485 are interaction with IWS1; it reads SDFVESEAEE…PKMQNAAKAS (484 aa). Residues 2–916 form an interaction with PAAF1 region; it reads SDFVESEAEE…PPVLRQAVSL (915 aa). The stretch at 3 to 51 forms a coiled coil; that stretch reads DFVESEAEESEEEYNHEGEVVPRVTKKFVEEEDDDEEEEEENLDDQDER. A phosphoserine mark is found at Ser7 and Ser12. Phosphoserine occurs at positions 73, 78, and 91. A compositionally biased stretch (acidic residues) spans 95 to 105; the sequence is RLEDDDFDLIE. Positions 111–122 are enriched in basic residues; the sequence is KVKRGQKYRRVK. Residue Ser125 is modified to Phosphoserine. Acidic residues-rich tracts occupy residues 126–136, 150–160, and 169–190; these read DDDEDDEEEYG, FQDEEGEEGQE, and PDEE…DDDG. A Phosphoserine modification is found at Ser267. The interval 317–1300 is interaction with KDM6A; the sequence is ADWIYRNAFA…NEWKLPKDTY (984 aa). The interval 489-520 is disordered; it reads LKRIKEDGDEEGEGEEAEDEEQRGPELKQASR. Over residues 495-509 the composition is skewed to acidic residues; sequence DGDEEGEGEEAEDEE. A compositionally biased stretch (basic and acidic residues) spans 510-520; it reads QRGPELKQASR. Lys743 is subject to N6-acetyllysine. The S1 motif domain occupies 1213–1282; it reads WNHFDSGSCP…EKFSADLTCR (70 aa). An SH2 domain is found at 1325 to 1431; sequence YIKRVIAHPS…FARDLLNHKY (107 aa). At Tyr1515 the chain carries Phosphotyrosine. Thr1523 is modified (phosphothreonine). Ser1526 carries the post-translational modification Phosphoserine. 2 positions are modified to phosphothreonine: Thr1530 and Thr1532. A Phosphoserine modification is found at Ser1535. Thr1539 carries the post-translational modification Phosphothreonine. The interaction with histone H2B and H3 stretch occupies residues 1633–1726; the sequence is PQYHQLQAST…ATPLLDEMDR (94 aa). A disordered region spans residues 1636–1726; it reads HQLQASTTPQ…ATPLLDEMDR (91 aa). Positions 1639–1664 are enriched in low complexity; that stretch reads QASTTPQSTQAQPQPSSSSRQRQQQP. N6-acetyllysine is present on Lys1676. Thr1697 carries the post-translational modification Phosphothreonine. Residues Ser1701 and Ser1703 each carry the phosphoserine modification. Residues Thr1709 and Thr1718 each carry the phosphothreonine modification.

This sequence belongs to the SPT6 family. Interacts with RNA polymerase II and the DRB sensitivity-inducing factor complex (DSIF complex), which is composed of SUPT5H and SUPT4H1 or SUPT4H2. Interacts with PAAF1. Interacts with histone H2B and H3. Interacts (via SH2 domain) with POLR2A phosphorylated at 'Ser-2'. Interacts (via SH2 domain) with SETD1A. Interacts with IWS1, KDM6A and AICDA. Interacts with WDR43. Post-translationally, dephosphorylated at Ser-1530 by the PNUTS-PP1 complex during RNA polymerase II transcription pause-release. As to expression, ubiquitously expressed.

The protein resides in the nucleus. Its function is as follows. Histone H3-H4 chaperone that plays a key role in the regulation of transcription elongation and mRNA processing. Enhances the transcription elongation by RNA polymerase II (RNAPII) and is also required for the efficient activation of transcriptional elongation by the HIV-1 nuclear transcriptional activator, Tat. Besides chaperoning histones in transcription, acts to transport and splice mRNA by forming a complex with IWS1 and the C-terminal domain (CTD) of the RNAPII subunit RPB1 (POLR2A). The SUPT6H:IWS1:CTD complex recruits mRNA export factors (ALYREF/THOC4, EXOSC10) as well as histone modifying enzymes (such as SETD2), to ensure proper mRNA splicing, efficient mRNA export and elongation-coupled H3K36 methylation, a signature chromatin mark of active transcription. SUPT6H via its association with SETD1A, regulates both class-switch recombination and somatic hypermutation through formation of H3K4me3 epigenetic marks on activation-induced cytidine deaminase (AICDA) target loci. Promotes the activation of the myogenic gene program by entailing erasure of the repressive H3K27me3 epigenetic mark through stabilization of the chromatin interaction of the H3K27 demethylase KDM6A. The chain is Transcription elongation factor SPT6 (Supt6h) from Mus musculus (Mouse).